The sequence spans 437 residues: Gamma-glutamyl phosphate reductase (437 aa).

Belongs to the gamma-glutamyl phosphate reductase family.

The protein resides in the cytoplasm. It catalyses the reaction L-glutamate 5-semialdehyde + phosphate + NADP(+) = L-glutamyl 5-phosphate + NADPH + H(+). It functions in the pathway amino-acid biosynthesis; L-proline biosynthesis; L-glutamate 5-semialdehyde from L-glutamate: step 2/2. Catalyzes the NADPH-dependent reduction of L-glutamate 5-phosphate into L-glutamate 5-semialdehyde and phosphate. The product spontaneously undergoes cyclization to form 1-pyrroline-5-carboxylate. This is Gamma-glutamyl phosphate reductase from Synechococcus sp. (strain CC9902).